A 162-amino-acid polypeptide reads, in one-letter code: Phospholipase A and acyltransferase 3 (162 aa).

Residues 1 to 133 (MRAPIPEPKP…VARSDQVRDV (133 aa)) lie on the Cytoplasmic side of the membrane. In terms of domain architecture, LRAT spans 13-129 (LIEIFRPFYR…LRYGVARSDQ (117 aa)). Residues His-23 and His-35 contribute to the active site. Cys-113 acts as the Acyl-thioester intermediate in catalysis. Residues 134 to 154 (IIAASVAGMGLAAMSLIGVMF) traverse the membrane as a helical segment. Residues 155-162 (SRNKRQKQ) lie on the Lumenal side of the membrane.

Belongs to the H-rev107 family. As to quaternary structure, interacts with PPP2R1A; this interaction might decrease PP2A activity. In terms of tissue distribution, widely expressed. Low expression, if any, in hematopoietic cells and thymus. In testis, confined to round spermatids. Expressed in normal ovarian epithelial cells. Down-regulated in some ovarian carcinomas and testicular germ cell tumors. Highly expressed in white adipose tissue.

It localises to the cell membrane. The protein resides in the cytoplasm. The protein localises to the cytosol. Its subcellular location is the perinuclear region. It is found in the peroxisome membrane. It localises to the mitochondrion membrane. The protein resides in the nucleus envelope. The protein localises to the lysosome membrane. Its subcellular location is the endoplasmic reticulum membrane. It catalyses the reaction a 1,2-diacyl-sn-glycero-3-phosphocholine + H2O = a 1-acyl-sn-glycero-3-phosphocholine + a fatty acid + H(+). The catalysed reaction is a 1,2-diacyl-sn-glycero-3-phosphocholine + H2O = a 2-acyl-sn-glycero-3-phosphocholine + a fatty acid + H(+). The enzyme catalyses 1,2-dihexadecanoyl-sn-glycero-3-phosphocholine + H2O = 1-hexadecanoyl-sn-glycero-3-phosphocholine + hexadecanoate + H(+). It carries out the reaction 1,2-dihexadecanoyl-sn-glycero-3-phosphocholine + H2O = 2-hexadecanoyl-sn-glycero-3-phosphocholine + hexadecanoate + H(+). It catalyses the reaction 1-hexadecanoyl-2-(9Z-octadecenoyl)-sn-glycero-3-phosphocholine + H2O = 2-(9Z-octadecenoyl)-sn-glycero-3-phosphocholine + hexadecanoate + H(+). The catalysed reaction is 1-hexadecanoyl-2-(9Z-octadecenoyl)-sn-glycero-3-phosphocholine + H2O = 1-hexadecanoyl-sn-glycero-3-phosphocholine + (9Z)-octadecenoate + H(+). The enzyme catalyses 1-hexadecanoyl-2-(5Z,8Z,11Z,14Z-eicosatetraenoyl)-sn-glycero-3-phosphocholine + H2O = 1-hexadecanoyl-sn-glycero-3-phosphocholine + (5Z,8Z,11Z,14Z)-eicosatetraenoate + H(+). It carries out the reaction 1-hexadecanoyl-2-(5Z,8Z,11Z,14Z-eicosatetraenoyl)-sn-glycero-3-phosphocholine + H2O = 2-(5Z,8Z,11Z,14Z)-eicosatetraenoyl-sn-glycero-3-phosphocholine + hexadecanoate + H(+). It catalyses the reaction 1-hexadecanoyl-2-(9Z,12Z-octadecadienoyl)-sn-glycero-3-phosphoethanolamine + H2O = 1-hexadecanoyl-sn-glycero-3-phosphoethanolamine + (9Z,12Z)-octadecadienoate + H(+). The catalysed reaction is 1-hexadecanoyl-2-(9Z,12Z-octadecadienoyl)-sn-glycero-3-phosphoethanolamine + H2O = 2-(9Z,12Z)-octadecadienoyl-sn-glycero-3-phosphoethanolamine + hexadecanoate + H(+). The enzyme catalyses 1-hexadecanoyl-2-(5Z,8Z,11Z,14Z-eicosatetraenoyl)-sn-glycero-3-phosphoethanolamine + H2O = 1-hexadecanoyl-sn-glycero-3-phosphoethanolamine + (5Z,8Z,11Z,14Z)-eicosatetraenoate + H(+). It carries out the reaction 1-hexadecanoyl-2-(5Z,8Z,11Z,14Z-eicosatetraenoyl)-sn-glycero-3-phosphoethanolamine + H2O = 2-(5Z,8Z,11Z,14Z)-eicosatetraenoyl-sn-glycero-3-phosphoethanolamine + hexadecanoate + H(+). It catalyses the reaction 1-hexanoyl-2-acyl-sn-glycero-3-phosphocholine + H2O = hexanoate + a 2-acyl-sn-glycero-3-phosphocholine + H(+). The catalysed reaction is 1-hexanoyl-2-acyl-sn-glycero-3-phosphocholine + H2O = 1-hexanoyl-sn-glycero-3-phosphocholine + a fatty acid + H(+). The enzyme catalyses 1,2-diheptadecanoyl-sn-glycero-3-phosphoethanolamine + 1-(9Z-octadecenoyl)-2-hexadecanoyl-sn-glycero-3-phosphocholine = 1,2-diheptadecanoyl-sn-glycero-3-phospho-N-hexadecanoyl-ethanolamine + 1-(9Z-octadecenoyl)-sn-glycero-3-phosphocholine + H(+). It carries out the reaction 1,2-diheptadecanoyl-sn-glycero-3-phosphoethanolamine + 1-(9Z-octadecenoyl)-2-hexadecanoyl-sn-glycero-3-phosphocholine = 1,2-diheptadecanoyl-sn-glycero-3-phospho-N-(9Z-octadecenoyl)-ethanolamine + 2-hexadecanoyl-sn-glycero-3-phosphocholine + H(+). It catalyses the reaction 1,2-dihexanoyl-sn-glycero-3-phosphoethanolamine + 2-heptanoyl-sn-glycero-3-phosphocholine = hexanoyl-sn-glycero-3-phosphoethanolamine + 1-hexanoyl-2-heptanoyl-sn-glycero-3-phosphocholine. The catalysed reaction is 1-hexadecanoyl-2-octadecanoyl-sn-glycero-3-phosphocholine + H2O = octadecanoate + 1-hexadecanoyl-sn-glycero-3-phosphocholine + H(+). The enzyme catalyses 1-hexadecanoyl-2-octadecanoyl-sn-glycero-3-phosphocholine + H2O = 2-octadecanoyl-sn-glycero-3-phosphocholine + hexadecanoate + H(+). It carries out the reaction 1-octadecanoyl-2-hexadecanoyl-sn-glycero-3-phosphocholine + H2O = 1-octadecanoyl-sn-glycero-3-phosphocholine + hexadecanoate + H(+). It catalyses the reaction 1-octadecanoyl-2-hexadecanoyl-sn-glycero-3-phosphocholine + H2O = 2-hexadecanoyl-sn-glycero-3-phosphocholine + octadecanoate + H(+). The catalysed reaction is 1-hexadecanoyl-2-(9Z,12Z-octadecadienoyl)-sn-glycero-3-phosphocholine + H2O = (9Z,12Z)-octadecadienoate + 1-hexadecanoyl-sn-glycero-3-phosphocholine + H(+). The enzyme catalyses 1-hexadecanoyl-2-(9Z,12Z-octadecadienoyl)-sn-glycero-3-phosphocholine + H2O = 2-(9Z,12Z-octadecadienoyl)-sn-glycero-3-phosphocholine + hexadecanoate + H(+). It carries out the reaction 1,2-di-(9Z-octadecenoyl)-sn-glycero-3-phosphocholine + H2O = 2-(9Z-octadecenoyl)-sn-glycero-3-phosphocholine + (9Z)-octadecenoate + H(+). It catalyses the reaction 1,2-dihexadecanoyl-sn-glycero-3-phosphocholine + H2O = hexadecanoyl-sn-glycero-3-phosphocholine + hexadecanoate + H(+). The catalysed reaction is 1,2-di-(9Z-octadecenoyl)-sn-glycero-3-phosphocholine + H2O = 1-(9Z-octadecenoyl)-sn-glycero-3-phosphocholine + (9Z)-octadecenoate + H(+). The enzyme catalyses 1,2-di-(9Z-octadecenoyl)-sn-glycero-3-phosphoethanolamine + 1,2-dihexadecanoyl-sn-glycero-3-phosphocholine = hexadecanoyl-sn-glycero-3-phosphocholine + N-hexadecanoyl-1,2-di-(9Z-octadecenoyl)-sn-glycero-3-phosphoethanolamine + H(+). It carries out the reaction 1,2-di-(9Z,12Z-octadecadienoyl)-sn-glycero-3-phosphocholine + H2O = 1-(9Z,12Z)-octadecadienoyl-sn-glycero-3-phosphocholine + (9Z,12Z)-octadecadienoate + H(+). Its function is as follows. Exhibits both phospholipase A1/2 and acyltransferase activities. Shows phospholipase A1 (PLA1) and A2 (PLA2) activity, catalyzing the calcium-independent release of fatty acids from the sn-1 or sn-2 position of glycerophospholipids. For most substrates, PLA1 activity is much higher than PLA2 activity. Shows O-acyltransferase activity,catalyzing the transfer of a fatty acyl group from glycerophospholipid to the hydroxyl group of lysophospholipid. Shows N-acyltransferase activity, catalyzing the calcium-independent transfer of a fatty acyl group at the sn-1 position of phosphatidylcholine (PC) and other glycerophospholipids to the primary amine of phosphatidylethanolamine (PE), forming N-acylphosphatidylethanolamine (NAPE), which serves as precursor for N-acylethanolamines (NAEs). Exhibits high N-acyltransferase activity and low phospholipase A1/2 activity. Required for complete organelle rupture and degradation that occur during eye lens terminal differentiation, when fiber cells that compose the lens degrade all membrane-bound organelles in order to provide lens with transparency to allow the passage of light. Organelle membrane degradation is probably catalyzed by the phospholipase activity. In terms of biological role, (Microbial infection) Acts as a host factor for picornaviruses: required during early infection to promote viral genome release into the cytoplasm. May act as a cellular sensor of membrane damage at sites of virus entry, which relocalizes to sites of membrane rupture upon virus unfection. Facilitates safe passage of the RNA away from LGALS8, enabling viral genome translation by host ribosome. May also be involved in initiating pore formation, increasing pore size or in maintaining pores for genome delivery. The lipid-modifying enzyme activity is required for this process. This chain is Phospholipase A and acyltransferase 3, found in Homo sapiens (Human).